The primary structure comprises 355 residues: N-acylethanolamine-hydrolyzing acid amidase (355 aa).

The N-terminal stretch at 1 to 17 (MLLLQIILLLLPVICSA) is a signal peptide. Cys-122 acts as the Nucleophile in catalysis. Residues Asn-150, Asn-160, and Asn-328 are each glycosylated (N-linked (GlcNAc...) asparagine).

This sequence belongs to the acid ceramidase family. As to quaternary structure, heterodimer of an alpha and a beta subunit, produced by autocatalytic cleavage. In terms of processing, N-glycosylated. Autoproteolytic cleavage at pH 4.5 gives rise to the alpha and beta subunit. Cleavage gives rise to a conformation change that activates the enzyme. The same catalytic Cys residue mediates the autoproteolytic cleavage and subsequent hydrolysis of lipid substrates.

Its subcellular location is the lysosome. The protein resides in the membrane. The catalysed reaction is N-hexadecanoylethanolamine + H2O = ethanolamine + hexadecanoate. The enzyme catalyses an N-(long-chain fatty acyl)ethanolamine + H2O = a long-chain fatty acid + ethanolamine. It functions in the pathway lipid metabolism; fatty acid metabolism. Functionally, degrades bioactive fatty acid amides, such as N-palmitoylethanolamine, to ethanolamine and free fatty acids. The chain is N-acylethanolamine-hydrolyzing acid amidase from Caenorhabditis elegans.